The chain runs to 917 residues: Interleukin-6 receptor subunit beta (917 aa).

Positions 1 to 22 (MSAPRIWLAQALLFFLTTESIG) are cleaved as a signal peptide. The Extracellular segment spans residues 23–617 (QLLEPCGYIY…TPKFAQGEIE (595 aa)). One can recognise an Ig-like C2-type domain in the interval 26–120 (EPCGYIYPEF…IEQNVYGVTM (95 aa)). 2 disulfides stabilise this stretch: Cys-28–Cys-54 and Cys-48–Cys-103. Residues Asn-43, Asn-61, Asn-83, and Asn-131 are each glycosylated (N-linked (GlcNAc...) asparagine). Fibronectin type-III domains follow at residues 128–221 (KPTN…VKPT), 222–322 (PPYN…TYED), 327–417 (PPSF…IPSP), 422–515 (AYSV…LKQA), and 517–611 (PARG…TPKF). A disulfide bridge links Cys-134 with Cys-144. Asn-157 carries N-linked (GlcNAc...) asparagine glycosylation. A disulfide bond links Cys-172 and Cys-180. An N-linked (GlcNAc...) asparagine glycan is attached at Asn-225. A WSXWS motif motif is present at residues 308 to 312 (WSDWS). The N-linked (GlcNAc...) asparagine glycan is linked to Asn-388. A disulfide bridge connects residues Cys-456 and Cys-464. N-linked (GlcNAc...) asparagine glycosylation is found at Asn-476 and Asn-551. A helical transmembrane segment spans residues 618 to 639 (AIVVPVCLAFLLTTLLGVLFCF). Residues 640–917 (NKRDLIKKHI…TVRQGGYMPQ (278 aa)) lie on the Cytoplasmic side of the membrane. A Box 1 motif motif is present at residues 649-657 (IWPNVPDPS). 2 disordered regions span residues 658 to 678 (KSHI…NSKD) and 719 to 754 (TEGH…TAST). Phosphoserine occurs at positions 659 and 665. Residues 729 to 753 (SSCMSSSRPSISSNEENESAQSTAS) show a composition bias toward low complexity. A phosphoserine mark is found at Ser-780, Ser-787, Ser-827, and Ser-837. The segment at 898 to 917 (EEIPKSYLPQTVRQGGYMPQ) is disordered.

Belongs to the type I cytokine receptor family. Type 2 subfamily. Component of a hexamer of two molecules each of IL6, IL6R and IL6ST; associates with the complex IL6:IL6R but does not interact with IL6. Forms heterodimers composed of LIFR and IL6ST (type I OSM receptor) which are activated by LIF and OSM. Also forms heterodimers composed of OSMR and IL6ST (type II receptor) which are activated by OSM but not by LIF. Interacts with HCK. Interacts with INPP5D/SHIP1. Interacts with SRC and YES. Interacts with ARMH4; this interaction prevents IL6ST protein homodimerization and bridges ARMH4 with IL6R and STAT3 and therefore inhibits phosphorylation of STAT3 at 'Tyr-705'. Phosphorylation of Ser-780 down-regulates cell surface expression. Post-translationally, heavily N-glycosylated. Glycosylation is required for protein stability and localization in plasma membrane but not for ligand binding. In terms of tissue distribution, expression not restricted to IL6-responsive cells. Found in tissues such as brain, heart, thymus, spleen, kidney, lung and liver. Found in all the cell lines tested except BaF-B03. Expressed paraventricular nucleus of the hypothalamus.

It is found in the cell membrane. Its function is as follows. Signal-transducing molecule. The receptor systems for IL6, LIF, OSM, CNTF, IL11, CTF1 and BSF3 can utilize IL6ST for initiating signal transmission. Binding of IL6 to IL6R induces IL6ST homodimerization and formation of a high-affinity receptor complex, which activates the intracellular JAK-MAPK and JAK-STAT3 signaling pathways. That causes phosphorylation of IL6ST tyrosine residues which in turn activates STAT3. In parallel, the IL6 signaling pathway induces the expression of two cytokine receptor signaling inhibitors, SOCS1 and SOCS3, which inhibit JAK and terminate the activity of the IL6 signaling pathway as a negative feedback loop. Also activates the yes-associated protein 1 (YAP) and NOTCH pathways to control inflammation-induced epithelial regeneration, independently of STAT3. Mediates signals which regulate immune response, hematopoiesis, pain control and bone metabolism. Has a role in embryonic development. Essential for survival of motor and sensory neurons and for differentiation of astrocytes. Required for expression of TRPA1 in nociceptive neurons. Required for the maintenance of PTH1R expression in the osteoblast lineage and for the stimulation of PTH-induced osteoblast differentiation. Required for normal trabecular bone mass and cortical bone composition. The sequence is that of Interleukin-6 receptor subunit beta from Mus musculus (Mouse).